We begin with the raw amino-acid sequence, 144 residues long: Nucleoside diphosphate kinase (144 aa).

The ATP site is built by lysine 11, phenylalanine 59, arginine 87, threonine 93, arginine 104, and asparagine 114. Catalysis depends on histidine 117, which acts as the Pros-phosphohistidine intermediate.

It belongs to the NDK family. Homotetramer. Mg(2+) serves as cofactor.

Its subcellular location is the cytoplasm. It catalyses the reaction a 2'-deoxyribonucleoside 5'-diphosphate + ATP = a 2'-deoxyribonucleoside 5'-triphosphate + ADP. It carries out the reaction a ribonucleoside 5'-diphosphate + ATP = a ribonucleoside 5'-triphosphate + ADP. Functionally, major role in the synthesis of nucleoside triphosphates other than ATP. The ATP gamma phosphate is transferred to the NDP beta phosphate via a ping-pong mechanism, using a phosphorylated active-site intermediate. This chain is Nucleoside diphosphate kinase, found in Aliivibrio fischeri (strain ATCC 700601 / ES114) (Vibrio fischeri).